We begin with the raw amino-acid sequence, 271 residues long: Phosphoglycerate mutase-like protein (271 aa).

The Tele-phosphohistidine intermediate role is filled by His-22. Catalysis depends on Glu-134, which acts as the Proton donor/acceptor. The segment at Ser-252–Gly-271 is disordered.

The protein belongs to the phosphoglycerate mutase family. Expressed in the shoot apical meristem and meristematic zone of the root tips.

Its function is as follows. May play a role in carbohydrates metabolism. This chain is Phosphoglycerate mutase-like protein, found in Arabidopsis thaliana (Mouse-ear cress).